The following is a 902-amino-acid chain: MASTCQRLSFYVSPLKRQLVSRPPVILWERLIPGCSRSIYSATGKWTKEYTLQTRKDVEKWWHQQIKEQASRVSEEDKLKPKFYLLSMFPYPSGKLHMGHVRVYTLSDTIARFQKMRGMQVINPMGWDAFGLPAENAAIERNLHPESWTQSNIKHMRKQLDRLGLCFSWDREITTCLPDYYKWTQYLFIKLYEAGLAYQKEALVNWDPVDQTVLANEQVNEYGCSWRSGAKVEKKYLRQWFIKTTAYAKAMQDALADLPEWYGIKGMQAHWIGDCVGCHLDFTLKVDGEDTGEKLTAYTATPEAIYGISHVAISPSHGLLHGCSSVKKALQKALVPGRDCLTPVMAVSMLTLQEVPIVIMANPDLEGSLDSKIGIPSTSSEDTRLAQALGLPYSEVIEASPDGTERLSGSAEFTGMTRQDAFVALTRKARGMRVGGHVTSNKLKDWLISRQRYWGTPIPIVHCPACGPVPVPLQDLPVILPSIASLTGRGGSPLATALEWVNCSCPRCKGSAKRETDTMDTFVDSAWYYFRYTDPHNTQSPFGSALADFWMPVDLYIGGKEHAVMHLFYARFLSHFCHDQKMVKHREPFHKLLAQGLIKGQTFRLPSGQCLKKEDIDFTGPAPVCAKTKEKLEVTWEKMSKSKHNGVDPEEIVAQYGIDTIRLYILFAAPPEKDILWDVKTDALPGVLRWQQRLWSLTTRFIEARTSGTVPQPQLLNSKEKTKAQNLWEYKNAVIAQVTTHFTEDFALNSVVSQLMGLSSALSQASQRVVLHSPEFEDALCALLVMAAPLAPHVTSELWAGLTLVPSKLCDHYAWDSGVMLQAWPTVDSQFLQKPDMVQMAVLINNKACGKIPVPQHVAQDQDKVHELVLQSELGMKLLQGRSIKKAFLSPRTALINFLVQE.

Position 67 is an N6-acetyllysine (Lys-67). Positions 91–101 (YPSGKLHMGHV) match the 'HIGH' region motif. N6-acetyllysine is present on Lys-235. The 'KMSKS' region motif lies at 638-642 (KMSKS). Position 641 (Lys-641) interacts with ATP.

The protein belongs to the class-I aminoacyl-tRNA synthetase family.

The protein resides in the mitochondrion matrix. The catalysed reaction is tRNA(Leu) + L-leucine + ATP = L-leucyl-tRNA(Leu) + AMP + diphosphate. This Mus musculus (Mouse) protein is Probable leucine--tRNA ligase, mitochondrial (Lars2).